A 227-amino-acid chain; its full sequence is MAKGVFITATNTDIGKTYITALIVKKLREANINCGYYKAVLSGAEIINNNIVAGDAKYVYNVANIKGNPNKCVSYIFEQPVSPHLAAKLNNVHISMDKIVDDFNYICNEHDYITVEGSGGIVCPIYYDKEKIMLTDIIKKLKIPIILVSSSGLGSINGTILTLEYIKKHNITVNSIILNNYDKNNIIHIDNRIILEEMTNLPVYICEQYSKDIDIPLKELKQFYDFI.

13–18 (DIGKTY) contacts ATP. Threonine 17 provides a ligand contact to Mg(2+). The active site involves lysine 38. A substrate-binding site is contributed by serine 42. ATP contacts are provided by residues aspartate 55, 116-119 (EGSG), and 179-180 (NN). Mg(2+) is bound by residues aspartate 55 and glutamate 116.

It belongs to the dethiobiotin synthetase family. As to quaternary structure, homodimer. Requires Mg(2+) as cofactor.

The protein resides in the cytoplasm. It carries out the reaction (7R,8S)-7,8-diammoniononanoate + CO2 + ATP = (4R,5S)-dethiobiotin + ADP + phosphate + 3 H(+). Its pathway is cofactor biosynthesis; biotin biosynthesis; biotin from 7,8-diaminononanoate: step 1/2. Catalyzes a mechanistically unusual reaction, the ATP-dependent insertion of CO2 between the N7 and N8 nitrogen atoms of 7,8-diaminopelargonic acid (DAPA, also called 7,8-diammoniononanoate) to form a ureido ring. In Clostridium botulinum (strain Alaska E43 / Type E3), this protein is ATP-dependent dethiobiotin synthetase BioD.